Here is a 255-residue protein sequence, read N- to C-terminus: MINFPQHPRQTLELAGFLPEASGRAVEWLISDSQVPYSEAVAAMDSRAAAIAAGDANELVWLLEHPPLYTSGTSGQAADLLDPRFPLHATGRGGQLTYHGPGQRVAYVMLDLKRRRPDVRAYVAALEQWIIATLEAFNVRGERREDRVGVWVARPDKGVGHEDKIAAIGVRLKRWVSLHGIAINVEPDLGHFAAIVPCGISDPRYGVTSLVDLGLPVTMTDVDLALRASFTTIFGATVNASGSEPAAGSVNSSSV.

The region spanning 54–238 (GDANELVWLL…SFTTIFGATV (185 aa)) is the BPL/LPL catalytic domain. Residues 92–99 (RGGQLTYH), 167–169 (AIG), and 180–182 (GIA) each bind substrate. Cys198 acts as the Acyl-thioester intermediate in catalysis.

The protein belongs to the LipB family.

It is found in the cytoplasm. It carries out the reaction octanoyl-[ACP] + L-lysyl-[protein] = N(6)-octanoyl-L-lysyl-[protein] + holo-[ACP] + H(+). It participates in protein modification; protein lipoylation via endogenous pathway; protein N(6)-(lipoyl)lysine from octanoyl-[acyl-carrier-protein]: step 1/2. In terms of biological role, catalyzes the transfer of endogenously produced octanoic acid from octanoyl-acyl-carrier-protein onto the lipoyl domains of lipoate-dependent enzymes. Lipoyl-ACP can also act as a substrate although octanoyl-ACP is likely to be the physiological substrate. This Rhodopseudomonas palustris (strain BisB5) protein is Octanoyltransferase.